The sequence spans 346 residues: MAMVSEFLKQAWFIENEEQEYVQTVKSSKGGPGSAVSPYPTFNPSSDVAALHKAIMVKGVDEATIIDILTKRNNAQRQQIKAAYLQETGKPLDETLKKALTGHLEEVVLALLKTPAQFDADELRAAMKGLGTDEDTLIEILASRTNKEIRDINRVYREELKRDLAKDITSDTSGDFRNALLSLAKGDRSEDFGVNEDLADSDARALYEAGERRKGTDVNVFNTILTTRSYPQLRRVFQKYTKYSKHDMNKVLDLELKGDIEKCLTAIVKCATSKPAFFAEKLHQAMKGVGTRHKALIRIMVSRSEIDMNDIKAFYQKMYGISLCQAILDETKGDYEKILVALCGGN.

Ala2 is modified (N-acetylalanine). The residue at position 5 (Ser5) is a Phosphoserine; by TRPM7. An Isoglutamyl lysine isopeptide (Gln-Lys) (interchain with K-?) cross-link involves residue Gln19. Position 21 is a phosphotyrosine; by EGFR (Tyr21). Phosphoserine; by PKC is present on Ser27. A phosphoserine mark is found at Ser34 and Ser37. Thr41 is subject to Phosphothreonine. Annexin repeat units lie at residues 42-113, 114-185, 197-269, and 273-344; these read FNPS…ALLK, TPAQ…SLAK, DLAD…AIVK, and SKPA…ALCG. Lys58 carries the N6-acetyllysine modification. The Ca(2+) site is built by Gly59, Val60, Glu62, Lys97, Leu100, Glu105, Met127, Gly129, Gly131, Thr132, and Glu134. Position 136 is a phosphothreonine (Thr136). Residues Asp171, Gly210, and Arg213 each coordinate Ca(2+). A Glycyl lysine isopeptide (Lys-Gly) (interchain with G-Cter in SUMO1); alternate cross-link involves residue Lys214. Lys214 participates in a covalent cross-link: Glycyl lysine isopeptide (Lys-Gly) (interchain with G-Cter in SUMO2); alternate. Gly215 contacts Ca(2+). N6-acetyllysine is present on Lys239. 3 residues coordinate Ca(2+): Asp253, Glu255, and Leu256. Lys257 participates in a covalent cross-link: Glycyl lysine isopeptide (Lys-Gly) (interchain with G-Cter in SUMO1). Positions 261, 286, 288, and 290 each coordinate Ca(2+). Lys312 carries the N6-acetyllysine modification. The cysteines at positions 324 and 343 are disulfide-linked. Residues Leu328, Glu330, and Thr331 each coordinate Ca(2+). Lys332 participates in a covalent cross-link: Glycyl lysine isopeptide (Lys-Gly) (interchain with G-Cter in SUMO1). A Ca(2+)-binding site is contributed by Glu336.

Belongs to the annexin family. In terms of assembly, homodimer; non-covalently linked. Homodimer; linked by transglutamylation. Homodimers linked by transglutamylation are observed in placenta, but not in other tissues. Interacts with S100A11. Heterotetramer, formed by two molecules each of S100A11 and ANXA1. Interacts with DYSF. Interacts with EGFR. Phosphorylated by protein kinase C, EGFR and TRPM7. Phosphorylated in response to EGF treatment. In terms of processing, sumoylated. Post-translationally, proteolytically cleaved by cathepsin CTSG to release the active N-terminal peptide Ac2-26. In terms of tissue distribution, detected in resting neutrophils. Detected in peripheral blood T-cells. Detected in extracellular vesicles in blood serum from patients with inflammatory bowel disease, but not in serum from healthy donors. Detected in placenta (at protein level). Detected in liver.

The protein localises to the nucleus. The protein resides in the cytoplasm. It is found in the cell projection. Its subcellular location is the cilium. It localises to the cell membrane. The protein localises to the membrane. The protein resides in the endosome membrane. It is found in the basolateral cell membrane. Its subcellular location is the apical cell membrane. It localises to the lateral cell membrane. The protein localises to the secreted. The protein resides in the extracellular space. It is found in the extracellular exosome. Its subcellular location is the cytoplasmic vesicle. It localises to the secretory vesicle lumen. The protein localises to the phagocytic cup. The protein resides in the early endosome. It is found in the cytoplasmic vesicle membrane. Plays important roles in the innate immune response as effector of glucocorticoid-mediated responses and regulator of the inflammatory process. Has anti-inflammatory activity. Plays a role in glucocorticoid-mediated down-regulation of the early phase of the inflammatory response. Contributes to the adaptive immune response by enhancing signaling cascades that are triggered by T-cell activation, regulates differentiation and proliferation of activated T-cells. Promotes the differentiation of T-cells into Th1 cells and negatively regulates differentiation into Th2 cells. Has no effect on unstimulated T cells. Negatively regulates hormone exocytosis via activation of the formyl peptide receptors and reorganization of the actin cytoskeleton. Has high affinity for Ca(2+) and can bind up to eight Ca(2+) ions. Displays Ca(2+)-dependent binding to phospholipid membranes. Plays a role in the formation of phagocytic cups and phagosomes. Plays a role in phagocytosis by mediating the Ca(2+)-dependent interaction between phagosomes and the actin cytoskeleton. Its function is as follows. Functions at least in part by activating the formyl peptide receptors and downstream signaling cascades. Promotes chemotaxis of granulocytes and monocytes via activation of the formyl peptide receptors. Promotes rearrangement of the actin cytoskeleton, cell polarization and cell migration. Promotes resolution of inflammation and wound healing. Acts via neutrophil N-formyl peptide receptors to enhance the release of CXCL2. This chain is Annexin A1 (ANXA1), found in Homo sapiens (Human).